A 173-amino-acid polypeptide reads, in one-letter code: Lipoprotein signal peptidase (173 aa).

A run of 3 helical transmembrane segments spans residues 11–31, 69–89, and 93–113; these read FGLI…WIVT, TTRW…AFWM, and QAKG…GNIV. Catalysis depends on residues Asp123 and Asp142. The helical transmembrane segment at 134–154 threads the bilayer; the sequence is PFMIFNVADACITIGVLLLVA.

This sequence belongs to the peptidase A8 family.

It localises to the cell inner membrane. The catalysed reaction is Release of signal peptides from bacterial membrane prolipoproteins. Hydrolyzes -Xaa-Yaa-Zaa-|-(S,diacylglyceryl)Cys-, in which Xaa is hydrophobic (preferably Leu), and Yaa (Ala or Ser) and Zaa (Gly or Ala) have small, neutral side chains.. Its pathway is protein modification; lipoprotein biosynthesis (signal peptide cleavage). In terms of biological role, this protein specifically catalyzes the removal of signal peptides from prolipoproteins. The polypeptide is Lipoprotein signal peptidase (Sphingopyxis alaskensis (strain DSM 13593 / LMG 18877 / RB2256) (Sphingomonas alaskensis)).